The primary structure comprises 630 residues: Pentatricopeptide repeat-containing protein At1g26460, mitochondrial (630 aa).

The N-terminal 115 residues, M1–N115, are a transit peptide targeting the mitochondrion. The segment at L42–S79 is disordered. The span at A67–W77 shows a compositional bias: polar residues. PPR repeat units lie at residues D154 to P189, N190 to S224, D227 to L261, S468 to P503, N504 to P538, and D539 to P573.

It belongs to the PPR family. P subfamily.

It is found in the mitochondrion. In Arabidopsis thaliana (Mouse-ear cress), this protein is Pentatricopeptide repeat-containing protein At1g26460, mitochondrial.